Reading from the N-terminus, the 60-residue chain is Large ribosomal subunit protein uL30 (60 aa).

This sequence belongs to the universal ribosomal protein uL30 family. Part of the 50S ribosomal subunit.

The polypeptide is Large ribosomal subunit protein uL30 (Limosilactobacillus fermentum (strain NBRC 3956 / LMG 18251) (Lactobacillus fermentum)).